The primary structure comprises 453 residues: MLDILILAAGKGTRMRSDLPKVLHPIGGKPLVQHVVDTARQVGGEQLLLIVGHGAEQVEQRMAAPDVKFVVQAQQLGTGHAVQQALPHLRPEATVLILYGDVPLTRAATLQKLVAGVTDQQMALLTVDLPDPSGYGRIVRDTSGAVVAIVEHKDASDEQRLICEINTGIMAVKARHLQQWLPRLGNNNAQGEYYLTDIIAMAKADGVAIHVEQPGAIQEVEGINNRQQQATLERYYQQQQARALMDAGVTLLDPARFDCRGNLSAGRDVVIDINCVIEGEVVLGDGVVIEPNCIIINSKIGNNTHIKAFSHIEDAVIAADCDIGPYARLRPGTNLADAVKIGNFVETKKAVIAKGSKVNHLSYIGDARVGSGVNVGAGTITCNYDGVNKFKTEIGDNAFIGSNSALVAPVNIGAGATVGAGSVITRDVDAAELAVARGKQRNIQGWERPTRKS.

The tract at residues 1–226 is pyrophosphorylase; it reads MLDILILAAG…IQEVEGINNR (226 aa). Residues 7-10, Lys21, Gln72, 77-78, 99-101, Gly136, Glu151, Asn166, and Asn224 contribute to the UDP-N-acetyl-alpha-D-glucosamine site; these read LAAG, GT, and YGD. Mg(2+) is bound at residue Asp101. Asn224 contributes to the Mg(2+) binding site. The linker stretch occupies residues 227–247; it reads QQQATLERYYQQQQARALMDA. An N-acetyltransferase region spans residues 248–453; sequence GVTLLDPARF…QGWERPTRKS (206 aa). 2 residues coordinate UDP-N-acetyl-alpha-D-glucosamine: Arg330 and Lys348. Residue His360 is the Proton acceptor of the active site. The UDP-N-acetyl-alpha-D-glucosamine site is built by Tyr363 and Asn374. Acetyl-CoA is bound by residues Ala377, 383 to 384, Ser402, Ala420, and Arg437; that span reads NY.

This sequence in the N-terminal section; belongs to the N-acetylglucosamine-1-phosphate uridyltransferase family. The protein in the C-terminal section; belongs to the transferase hexapeptide repeat family. As to quaternary structure, homotrimer. Requires Mg(2+) as cofactor.

Its subcellular location is the cytoplasm. It catalyses the reaction alpha-D-glucosamine 1-phosphate + acetyl-CoA = N-acetyl-alpha-D-glucosamine 1-phosphate + CoA + H(+). The enzyme catalyses N-acetyl-alpha-D-glucosamine 1-phosphate + UTP + H(+) = UDP-N-acetyl-alpha-D-glucosamine + diphosphate. It functions in the pathway nucleotide-sugar biosynthesis; UDP-N-acetyl-alpha-D-glucosamine biosynthesis; N-acetyl-alpha-D-glucosamine 1-phosphate from alpha-D-glucosamine 6-phosphate (route II): step 2/2. The protein operates within nucleotide-sugar biosynthesis; UDP-N-acetyl-alpha-D-glucosamine biosynthesis; UDP-N-acetyl-alpha-D-glucosamine from N-acetyl-alpha-D-glucosamine 1-phosphate: step 1/1. It participates in bacterial outer membrane biogenesis; LPS lipid A biosynthesis. Functionally, catalyzes the last two sequential reactions in the de novo biosynthetic pathway for UDP-N-acetylglucosamine (UDP-GlcNAc). The C-terminal domain catalyzes the transfer of acetyl group from acetyl coenzyme A to glucosamine-1-phosphate (GlcN-1-P) to produce N-acetylglucosamine-1-phosphate (GlcNAc-1-P), which is converted into UDP-GlcNAc by the transfer of uridine 5-monophosphate (from uridine 5-triphosphate), a reaction catalyzed by the N-terminal domain. The chain is Bifunctional protein GlmU from Cellvibrio japonicus (strain Ueda107) (Pseudomonas fluorescens subsp. cellulosa).